The chain runs to 451 residues: Heme sensor protein HssS (451 aa).

A run of 2 helical transmembrane segments spans residues 9-29 (IAIY…LFTN) and 164-184 (IFLA…VIAS). Residues 186-238 (YSIIKPVTALKNATTRIMKGDFSTPIKQTRHDEIGTLQSRFNTMRQNLGQVDQ) enclose the HAMP domain. One can recognise a Histidine kinase domain in the interval 246 to 451 (NVSHEIKTPL…KTQFIVKLFI (206 aa)). His-249 bears the Phosphohistidine; by autocatalysis mark.

Post-translationally, autophosphorylated.

The protein resides in the cell membrane. The enzyme catalyses ATP + protein L-histidine = ADP + protein N-phospho-L-histidine.. Functionally, member of the two-component regulatory system HssS/HssR involved in intracellular heme homeostasis and tempering of staphylococcal virulence. HssS functions as a heme sensor histidine kinase which is autophosphorylated at a histidine residue and transfers its phosphate group to an aspartate residue of HssR. HssR/HssS activates the expression of HrtAB, an efflux pump, in response to extracellular heme, hemin, hemoglobin or blood. This is Heme sensor protein HssS (hssS) from Staphylococcus epidermidis (strain ATCC 12228 / FDA PCI 1200).